The following is a 122-amino-acid chain: MRHYEIVFIVHPDQSEQVPAMVERYKTMIAEANGKIHRLEDWGRRQLAYPINKIHKAHYVLMNIETTPEVVEELETAFRFNDAVLRHLTIKTKHAVTEASPMLGGEKAKNLLSGASEEAVAQ.

This sequence belongs to the bacterial ribosomal protein bS6 family.

Binds together with bS18 to 16S ribosomal RNA. In Neisseria meningitidis serogroup C (strain 053442), this protein is Small ribosomal subunit protein bS6.